A 609-amino-acid chain; its full sequence is Forkhead box protein O (609 aa).

2 disordered regions span residues 1–89 (MDGF…KNSS) and 181–263 (KSVR…SSCG). A Phosphothreonine; by PKB/AKT1 modification is found at Thr43. A compositionally biased stretch (polar residues) spans 62-79 (TKASNQQLASGDPQQAMQ). The span at 80-89 (NANAAKKNSS) shows a compositional bias: low complexity. Residues 94-200 (WGNLSYADLI…ETSRYEKRRG (107 aa)) constitute a DNA-binding region (fork-head). Residue Ser189 is modified to Phosphoserine; by PKB/AKT1. Composition is skewed to polar residues over residues 220–229 (ATPSPSSSVS) and 254–263 (RASSNASSCG). Ser257 bears the Phosphoserine; by PKB/AKT1 mark. 3 positions are modified to phosphoserine: Ser260, Ser261, and Ser266. Disordered stretches follow at residues 321–365 (AASG…QGQG) and 384–411 (RDGL…DSLN). The span at 327-339 (TQPPPPYQPPQQP) shows a compositional bias: pro residues. Over residues 388–397 (SPNSVTTTMS) the composition is skewed to polar residues.

As to quaternary structure, interacts with melt.

The protein localises to the cytoplasm. It is found in the nucleus. In terms of biological role, transcription factor involved in the regulation of the insulin signaling pathway. Consistently activates both the downstream target Thor\d4EBP and the feedback control target InR. Involved in negative regulation of the cell cycle, modulating cell growth and proliferation. In response to cellular stresses, such as nutrient deprivation or increased levels of reactive oxygen species, foxo is activated and inhibits growth through the action of target genes such as Thor. Foxo activated in the adult fat body can regulate lifespan in adults; an insulin peptide itself may function as one secondary messenger of insulin-regulated aging. Also regulates Lip4, homolog of human acid lipases, thereby acting as a key modulator of lipid metabolism by insulin signaling and integrates insulin responses to glucose and lipid homeostasis. The protein is Forkhead box protein O of Drosophila virilis (Fruit fly).